Reading from the N-terminus, the 311-residue chain is Formimidoylglutamase (311 aa).

Mn(2+)-binding residues include histidine 130, aspartate 155, histidine 157, aspartate 159, cysteine 242, and aspartate 244.

It belongs to the arginase family. Requires Mn(2+) as cofactor.

The catalysed reaction is N-formimidoyl-L-glutamate + H2O = formamide + L-glutamate. It functions in the pathway amino-acid degradation; L-histidine degradation into L-glutamate; L-glutamate from N-formimidoyl-L-glutamate (hydrolase route): step 1/1. Its function is as follows. Catalyzes the conversion of N-formimidoyl-L-glutamate to L-glutamate and formamide. This chain is Formimidoylglutamase, found in Staphylococcus haemolyticus (strain JCSC1435).